A 108-amino-acid polypeptide reads, in one-letter code: Tetrahydromethanopterin S-methyltransferase subunit B (108 aa).

A helical transmembrane segment spans residues 81 to 101 (FFGFWISLSILTLGLILVIGL).

The protein belongs to the MtrB family. As to quaternary structure, the complex is composed of 8 subunits; MtrA, MtrB, MtrC, MtrD, MtrE, MtrF, MtrG and MtrH.

The protein localises to the cell membrane. It catalyses the reaction 5-methyl-5,6,7,8-tetrahydromethanopterin + coenzyme M + 2 Na(+)(in) = 5,6,7,8-tetrahydromethanopterin + methyl-coenzyme M + 2 Na(+)(out). It functions in the pathway one-carbon metabolism; methanogenesis from CO(2); methyl-coenzyme M from 5,10-methylene-5,6,7,8-tetrahydromethanopterin: step 2/2. In terms of biological role, part of a complex that catalyzes the formation of methyl-coenzyme M and tetrahydromethanopterin from coenzyme M and methyl-tetrahydromethanopterin. This is an energy-conserving, sodium-ion translocating step. In Methanococcus aeolicus (strain ATCC BAA-1280 / DSM 17508 / OCM 812 / Nankai-3), this protein is Tetrahydromethanopterin S-methyltransferase subunit B.